Consider the following 151-residue polypeptide: Large ribosomal subunit protein uL22c (151 aa).

It belongs to the universal ribosomal protein uL22 family. Part of the 50S ribosomal subunit.

It is found in the plastid. The protein localises to the chloroplast. Functionally, this protein binds specifically to 23S rRNA. In terms of biological role, the globular domain of the protein is located near the polypeptide exit tunnel on the outside of the subunit, while an extended beta-hairpin is found that lines the wall of the exit tunnel in the center of the 70S ribosome. The protein is Large ribosomal subunit protein uL22c (rpl22) of Gossypium barbadense (Sea Island cotton).